The primary structure comprises 324 residues: Inhibitor of growth protein 1 homolog (324 aa).

Residues 120–237 (AEEEKKKKKS…SSRKQKSMAA (118 aa)) form a disordered region. Low complexity predominate over residues 140–169 (SSTTSSSSSSSSSSLSLSSSTNNTSSLNSS). Gly residues predominate over residues 170 to 186 (SGGGGGGSGGGGGGGGH). Low complexity predominate over residues 201–229 (SLTSSSSSGNINGMSSSSSSSSSSSSLSS). The segment at 271-320 (PTYCFCNRVSFGEMVGCENPDCKIEWFHFECVGLTSTPKGKWYCPDCTRI) adopts a PHD-type zinc-finger fold. Zn(2+)-binding residues include Cys274, Cys276, Cys287, Cys292, His298, Cys301, Cys314, and Cys317.

It belongs to the ING family. In terms of assembly, interacts with H3K4me3 and to a lesser extent with H3K4me2.

It is found in the nucleus. Its function is as follows. Involved in regulation of the growth and differentiation transition (GDT) process, probably by regulating gene expression via histone modification. This is Inhibitor of growth protein 1 homolog from Dictyostelium discoideum (Social amoeba).